An 85-amino-acid polypeptide reads, in one-letter code: Putative RING finger protein 095L (85 aa).

An RING-type; degenerate zinc finger spans residues Cys-39 to Arg-73.

The protein is Putative RING finger protein 095L of Invertebrate iridescent virus 6 (IIV-6).